The sequence spans 133 residues: Small ribosomal subunit protein uS8 (133 aa).

Belongs to the universal ribosomal protein uS8 family. In terms of assembly, part of the 30S ribosomal subunit. Contacts proteins S5 and S12.

One of the primary rRNA binding proteins, it binds directly to 16S rRNA central domain where it helps coordinate assembly of the platform of the 30S subunit. The polypeptide is Small ribosomal subunit protein uS8 (Prochlorococcus marinus (strain MIT 9215)).